Here is a 449-residue protein sequence, read N- to C-terminus: UDP-N-acetylmuramoylalanine--D-glutamate ligase (449 aa).

Position 118–124 (118–124) interacts with ATP; that stretch reads GTNGKTT.

Belongs to the MurCDEF family.

It is found in the cytoplasm. It catalyses the reaction UDP-N-acetyl-alpha-D-muramoyl-L-alanine + D-glutamate + ATP = UDP-N-acetyl-alpha-D-muramoyl-L-alanyl-D-glutamate + ADP + phosphate + H(+). It participates in cell wall biogenesis; peptidoglycan biosynthesis. In terms of biological role, cell wall formation. Catalyzes the addition of glutamate to the nucleotide precursor UDP-N-acetylmuramoyl-L-alanine (UMA). This chain is UDP-N-acetylmuramoylalanine--D-glutamate ligase, found in Staphylococcus epidermidis (strain ATCC 12228 / FDA PCI 1200).